The following is a 270-amino-acid chain: Eukaryotic translation initiation factor 2 subunit beta (270 aa).

The interval 1 to 38 is disordered; the sequence is MADEEQMERKEEATEIAPFDPTKKKKKKKVVIQDPADE.

This sequence belongs to the eIF-2-beta/eIF-5 family. Eukaryotic translation initiation factor 2 eIF2 is a heterotrimeric complex composed of an alpha, a beta and a gamma subunit.

The protein resides in the cytoplasm. Its subcellular location is the cytosol. In terms of biological role, component of the eIF2 complex that functions in the early steps of protein synthesis by forming a ternary complex with GTP and initiator tRNA. This complex binds to a 40S ribosomal subunit, followed by mRNA binding to form a 43S pre-initiation complex (43S PIC). Junction of the 60S ribosomal subunit to form the 80S initiation complex is preceded by hydrolysis of the GTP bound to eIF2 and release of an eIF2-GDP binary complex. In order for eIF2 to recycle and catalyze another round of initiation, the GDP bound to eIF2 must exchange with GTP by way of a reaction catalyzed by eIF2B. The chain is Eukaryotic translation initiation factor 2 subunit beta from Triticum aestivum (Wheat).